The following is a 388-amino-acid chain: Probable fatty acid desaturase DES1 (388 aa).

The disordered stretch occupies residues 1 to 33 (MATTPMTVVDHEAEEAVAKAREDDKSRQVDAFD). The span at 9 to 30 (VDHEAEEAVAKAREDDKSRQVD) shows a compositional bias: basic and acidic residues. A run of 2 helical transmembrane segments spans residues 62–82 (LWYV…AAAM) and 85–105 (WAVW…FFVL). The Histidine box-1 signature appears at 107–111 (HDCGH). Residues 119–139 (TLNSVVGHLLHSFILIPYHGW) form a helical membrane-spanning segment. A Histidine box-2 motif is present at residues 143–147 (HRTHH). 3 consecutive transmembrane segments (helical) span residues 177 to 194 (IRFT…YLFY), 226 to 246 (WCIM…LQVL), and 248 to 268 (MYGL…YLHH). Positions 310–314 (HVIHH) match the Histidine box-3 motif.

Belongs to the fatty acid desaturase type 1 family. In terms of tissue distribution, highly expressed in root hair cells. Barely detected in panicle, shoot apex, stems and leaves.

It localises to the membrane. The protein operates within lipid metabolism; polyunsaturated fatty acid biosynthesis. The polypeptide is Probable fatty acid desaturase DES1 (Sorghum bicolor (Sorghum)).